Consider the following 285-residue polypeptide: RNA polymerase sigma factor RpoH (285 aa).

A sigma-70 factor domain-2 region spans residues 53–122 (LILSHLRFVV…IHEYVLRNWR (70 aa)). An Interaction with polymerase core subunit RpoC motif is present at residues 77–80 (DLVQ). The interval 229–280 (ALASLDERSQHIVRSRWLDDDKATLQDLAEMYGVSAERIRQLEKNAMKKLKM) is sigma-70 factor domain-4. The H-T-H motif DNA-binding region spans 253-272 (LQDLAEMYGVSAERIRQLEK).

Belongs to the sigma-70 factor family. RpoH subfamily. In terms of assembly, interacts with the RNA polymerase core enzyme.

Its subcellular location is the cytoplasm. Sigma factors are initiation factors that promote the attachment of RNA polymerase to specific initiation sites and are then released. This sigma factor is involved in regulation of expression of heat shock genes. In Vibrio vulnificus (strain CMCP6), this protein is RNA polymerase sigma factor RpoH.